Here is a 398-residue protein sequence, read N- to C-terminus: Succinate--CoA ligase [ADP-forming] subunit beta (398 aa).

The ATP-grasp domain occupies 9-237; that stretch reads RDLFETHGVP…AGGLDILELK (229 aa). ATP-binding positions include lysine 45, 52 to 54, alanine 94, and glutamate 99; that span reads GRG. Mg(2+) is bound by residues asparagine 191 and aspartate 205. Substrate-binding positions include asparagine 257 and 319-321; that span reads GIT.

Belongs to the succinate/malate CoA ligase beta subunit family. In terms of assembly, heterotetramer of two alpha and two beta subunits. Mg(2+) is required as a cofactor.

The catalysed reaction is succinate + ATP + CoA = succinyl-CoA + ADP + phosphate. It carries out the reaction GTP + succinate + CoA = succinyl-CoA + GDP + phosphate. It participates in carbohydrate metabolism; tricarboxylic acid cycle; succinate from succinyl-CoA (ligase route): step 1/1. Functionally, succinyl-CoA synthetase functions in the citric acid cycle (TCA), coupling the hydrolysis of succinyl-CoA to the synthesis of either ATP or GTP and thus represents the only step of substrate-level phosphorylation in the TCA. The beta subunit provides nucleotide specificity of the enzyme and binds the substrate succinate, while the binding sites for coenzyme A and phosphate are found in the alpha subunit. The protein is Succinate--CoA ligase [ADP-forming] subunit beta of Corynebacterium glutamicum (strain ATCC 13032 / DSM 20300 / JCM 1318 / BCRC 11384 / CCUG 27702 / LMG 3730 / NBRC 12168 / NCIMB 10025 / NRRL B-2784 / 534).